The primary structure comprises 804 residues: Exo-1,4-beta-xylosidase xlnD (804 aa).

The signal sequence occupies residues 1 to 26; the sequence is MAHSMSRPVAATAAALLALALPQALA. N-linked (GlcNAc...) asparagine glycosylation is found at N29, N124, N148, N242, and N251. Residue D315 is part of the active site. N-linked (GlcNAc...) asparagine glycosylation is found at N357, N390, N413, N444, N455, N573, N665, N696, and N718.

This sequence belongs to the glycosyl hydrolase 3 family.

It localises to the secreted. It catalyses the reaction Hydrolysis of (1-&gt;4)-beta-D-xylans, to remove successive D-xylose residues from the non-reducing termini.. Its pathway is glycan degradation; xylan degradation. Functionally, xylan 1,4-beta-xylosidase involved in the hydrolysis of xylan, a major structural heterogeneous polysaccharide found in plant biomass representing the second most abundant polysaccharide in the biosphere, after cellulose. In Aspergillus awamori (Black koji mold), this protein is Exo-1,4-beta-xylosidase xlnD (xlnD).